We begin with the raw amino-acid sequence, 107 residues long: U1-lycotoxin-Ls1c (107 aa).

The signal sequence occupies residues 1 to 20 (MMKVLVVVALLVTLISYSSS). The propeptide occupies 21–41 (EGIDDLEADELLSLMANEQTR). Intrachain disulfides connect Cys-44–Cys-59, Cys-51–Cys-68, Cys-58–Cys-86, and Cys-70–Cys-84.

The protein belongs to the neurotoxin 19 (CSTX) family. 04 (U1-Lctx) subfamily. Expressed by the venom gland.

It is found in the secreted. This is U1-lycotoxin-Ls1c from Lycosa singoriensis (Wolf spider).